A 245-amino-acid chain; its full sequence is MASPSRRLQTKPVITCFKSVLLIYTFIFWITGVILLAVGIWGKVSLENYFSLLNEKATNVPFVLIATGTVIILLGTFGCFATCRASAWMLKLYAMFLTLVFLVELVAAIVGFVFRHEIKNSFKNNYEKALKQYNSTGDYRSHAVDKIQNTLHCCGVTDYRDWTDTNYYSEKGFPKSCCKLEDCTPQRDADKVNNEGCFIKVMTIIESEMGVVAGISFGVACFQLIGIFLAYCLSRAITNNQYEIV.

Over 1 to 19 the chain is Cytoplasmic; sequence MASPSRRLQTKPVITCFKS. Residues 20-40 form a helical membrane-spanning segment; that stretch reads VLLIYTFIFWITGVILLAVGI. The Extracellular segment spans residues 41–59; it reads WGKVSLENYFSLLNEKATN. A helical transmembrane segment spans residues 60-80; that stretch reads VPFVLIATGTVIILLGTFGCF. Residues 81–93 are Cytoplasmic-facing; that stretch reads ATCRASAWMLKLY. The helical transmembrane segment at 94–114 threads the bilayer; that stretch reads AMFLTLVFLVELVAAIVGFVF. Residues 115–208 lie on the Extracellular side of the membrane; the sequence is RHEIKNSFKN…IKVMTIIESE (94 aa). Asn134 is a glycosylation site (N-linked (GlcNAc...) asparagine). The chain crosses the membrane as a helical span at residues 209-229; the sequence is MGVVAGISFGVACFQLIGIFL. At 230-245 the chain is on the cytoplasmic side; it reads AYCLSRAITNNQYEIV.

It belongs to the tetraspanin (TM4SF) family.

The protein localises to the membrane. The chain is Tetraspanin-6 (TSPAN6) from Homo sapiens (Human).